The following is a 371-amino-acid chain: Alanine dehydrogenase (371 aa).

Positions 15 and 75 each coordinate substrate. The Proton donor/acceptor role is filled by His96. Residues Ser134, 178–179 (TA), Asp198, Lys203, Ser220, 239–240 (VL), 267–270 (IAID), Arg279, and 298–301 (VANM) each bind NAD(+). Residue Asp270 is the Proton donor/acceptor of the active site. Mg(2+) is bound by residues Glu323 and His327.

It belongs to the AlaDH/PNT family. Homohexamer. Trimer of dimers. Requires Mg(2+) as cofactor.

It localises to the secreted. It carries out the reaction L-alanine + NAD(+) + H2O = pyruvate + NH4(+) + NADH + H(+). Its pathway is amino-acid degradation; L-alanine degradation via dehydrogenase pathway; NH(3) and pyruvate from L-alanine: step 1/1. Its activity is regulated as follows. Inhibited by CuSO(4) and ZnCl(2). Functionally, catalyzes the reversible reductive amination of pyruvate to L-alanine. However, since the physiological environment of M.tuberculosis has a neutral pH, it can be assumed that the enzyme catalyzes exclusively the formation of L-alanine. May play a role in cell wall synthesis as L-alanine is an important constituent of the peptidoglycan layer. The sequence is that of Alanine dehydrogenase (ald) from Mycobacterium tuberculosis (strain ATCC 25618 / H37Rv).